The chain runs to 227 residues: Enolase-phosphatase E1 (227 aa).

Positions 12 and 14 each coordinate Mg(2+). Residues 118 to 119 and Lys-159 contribute to the substrate site; that span reads SS. Asp-186 lines the Mg(2+) pocket.

Belongs to the HAD-like hydrolase superfamily. MasA/MtnC family. As to quaternary structure, monomer. It depends on Mg(2+) as a cofactor.

Its subcellular location is the cytoplasm. The protein localises to the nucleus. The catalysed reaction is 5-methylsulfanyl-2,3-dioxopentyl phosphate + H2O = 1,2-dihydroxy-5-(methylsulfanyl)pent-1-en-3-one + phosphate. It functions in the pathway amino-acid biosynthesis; L-methionine biosynthesis via salvage pathway; L-methionine from S-methyl-5-thio-alpha-D-ribose 1-phosphate: step 3/6. The protein operates within amino-acid biosynthesis; L-methionine biosynthesis via salvage pathway; L-methionine from S-methyl-5-thio-alpha-D-ribose 1-phosphate: step 4/6. In terms of biological role, bifunctional enzyme that catalyzes the enolization of 2,3-diketo-5-methylthiopentyl-1-phosphate (DK-MTP-1-P) into the intermediate 2-hydroxy-3-keto-5-methylthiopentenyl-1-phosphate (HK-MTPenyl-1-P), which is then dephosphorylated to form the acireductone 1,2-dihydroxy-3-keto-5-methylthiopentene (DHK-MTPene). This is Enolase-phosphatase E1 from Vanderwaltozyma polyspora (strain ATCC 22028 / DSM 70294 / BCRC 21397 / CBS 2163 / NBRC 10782 / NRRL Y-8283 / UCD 57-17) (Kluyveromyces polysporus).